Reading from the N-terminus, the 158-residue chain is Snaclec alboaggregin-D subunit alpha (158 aa).

Positions 1-23 (MGRFIFGSFGLLVVFLSLSGTGA) are cleaved as a signal peptide. Disulfide bonds link C27–C38, C55–C152, and C127–C144. The C-type lectin domain maps to 34–153 (YDRYCYQAFS…CAELNPFICK (120 aa)).

This sequence belongs to the snaclec family. As to quaternary structure, tetramer of heterodimers of alpha and beta subunits (alphabeta)(4); disulfide-linked. Expressed by the venom gland.

The protein localises to the secreted. Snaclec that induces human platelet aggregation in the absence of any cofactor with the EC(50) of 0.25 nM and causes tyrosine phosphorylation in human platelets. Antibodies against either platelet GPIbalpha (GP1BA) or GPVI (GP6) inhibit alboaggregin D-induced platelet aggregation. Only the combination of these two antibodies completely inhibit aggregation, suggesting that it acts through both GPIbalpha (GP1BA) and GPVI (GP6). This chain is Snaclec alboaggregin-D subunit alpha, found in Trimeresurus albolabris (White-lipped pit viper).